The primary structure comprises 538 residues: MTDLNKVVKELEALGIYDVKEVVYNPSYEQLFEEETKPGLEGFEKGTLTTTGAVAVDTGIFTGRSPKDKYIVLDEKTKDTVWWTSETAKNDNKPMNQATWQSLKDLVTNQLSRKRLFVVDGFCGASEHDRIAVRIVTEVAWQAHFVKNMFIRPTEEQLKNFEPDFVVMNGSKVTNPNWKEQGLNSENFVAFNLTERIQLIGGTWYGGEMKKGMFSIMNYFLPLKGVGAMHCSANVGKDGDVAIFFGLSGTGKTTLSTDPKRELIGDDEHGWDDVGIFNFEGGCYAKTIHLSEENEPDIYRAIRRDALLENVVVRADGSVDFDDGSKTENTRVSYPIYHIDNIVKPVSRAGHATKVIFLTADAFGVLPPVSKLTPEQTKYYFLSGFTAKLAGTERGITEPTPTFSACFGAAFLTLHPTQYAEVLVKRMQAAGAEAYLVNTGWNGTGKRISIKDTRGIIDAILDGSIEKAEMGELPIFNLAIPKALLGVDSAILDPRDTYADKAQWQSKAEDLAGRFVKNFVKYATNEEGKALIAAGPKA.

Substrate contacts are provided by Arg64, Tyr205, and Lys211. Residues Lys211, His230, and 246–254 (GLSGTGKTT) each bind ATP. Positions 211 and 230 each coordinate Mn(2+). Position 267 (Asp267) interacts with Mn(2+). ATP is bound by residues Glu295, Arg331, 447 to 448 (RI), and Thr453. Residue Arg331 coordinates substrate.

This sequence belongs to the phosphoenolpyruvate carboxykinase (ATP) family. As to quaternary structure, monomer. The cofactor is Mn(2+).

The protein resides in the cytoplasm. The enzyme catalyses oxaloacetate + ATP = phosphoenolpyruvate + ADP + CO2. Its pathway is carbohydrate biosynthesis; gluconeogenesis. In terms of biological role, involved in the gluconeogenesis. Catalyzes the conversion of oxaloacetate (OAA) to phosphoenolpyruvate (PEP) through direct phosphoryl transfer between the nucleoside triphosphate and OAA. In Haemophilus influenzae (strain PittEE), this protein is Phosphoenolpyruvate carboxykinase (ATP).